The following is a 789-amino-acid chain: Ribonucleoside-diphosphate reductase large subunit (789 aa).

Substrate is bound by residues threonine 207, 222–223 (SC), glycine 253, 435–439 (NLCTE), and 620–624 (PTVSS). Cysteine 223 and cysteine 452 are disulfide-bonded. The active-site Proton acceptor is asparagine 435. The active-site Cysteine radical intermediate is the cysteine 437. The Proton acceptor role is filled by glutamate 439.

The protein belongs to the ribonucleoside diphosphate reductase large chain family. In terms of assembly, heterotetramer composed of a homodimer of the large subunit (R1) and a homodimer of the small subunit (R2). Larger multisubunit protein complex are also active, composed of (R1)n(R2)n.

The enzyme catalyses a 2'-deoxyribonucleoside 5'-diphosphate + [thioredoxin]-disulfide + H2O = a ribonucleoside 5'-diphosphate + [thioredoxin]-dithiol. Functionally, ribonucleoside-diphosphate reductase holoenzyme provides the precursors necessary for viral DNA synthesis. Allows virus growth in non-dividing cells, as well as reactivation from latency in infected hosts. Catalyzes the biosynthesis of deoxyribonucleotides from the corresponding ribonucleotides. The chain is Ribonucleoside-diphosphate reductase large subunit from Equus caballus (Horse).